A 253-amino-acid chain; its full sequence is MMTESILQIRDLSVYYNQKKTLKDVSLDLYPNEITALIGPSGSGKSTLLRSINRMNDLNPEVTITGSIVYNGHNIYSPRTDTVDLRKEIGMVFQQPNPFPMSIYENVVYGLRLKGIRDKSILDHAVESSLKGASIWNEVKDRLHDSAVGLSGGQQQRVCIARVLATSPRIILLDEPTSALDPISAGKIEETLLLLKKDYTLAIVTRSMQQASRLSDRTGFFLEGDLLECGPTKAMFMNPKRKETEDYISGKFG.

In terms of domain architecture, ABC transporter spans 7 to 248 (LQIRDLSVYY…PKRKETEDYI (242 aa)). 39–46 (GPSGSGKS) contributes to the ATP binding site.

Belongs to the ABC transporter superfamily. Phosphate importer (TC 3.A.1.7) family. As to quaternary structure, the complex is composed of two ATP-binding proteins (PstB), two transmembrane proteins (PstC and PstA) and a solute-binding protein (PstS).

Its subcellular location is the cell membrane. The enzyme catalyses phosphate(out) + ATP + H2O = ADP + 2 phosphate(in) + H(+). In terms of biological role, part of the ABC transporter complex PstSACB involved in phosphate import. Responsible for energy coupling to the transport system. The chain is Phosphate import ATP-binding protein PstB 1 from Streptococcus pyogenes serotype M12 (strain MGAS9429).